The chain runs to 61 residues: Furostanol glycoside 26-O-beta-glucosidase (61 aa).

Catalysis depends on D33, which acts as the Proton donor/acceptor. Position 33 (D33) interacts with D-glucose.

This sequence belongs to the glycosyl hydrolase 3 family. As to quaternary structure, monomer. In terms of processing, glycosylated. In terms of tissue distribution, expressed in petioles and leaves, but not in fruits.

It carries out the reaction protodioscin + H2O = 26-deglucoprotodioscin + D-glucose. Its activity is regulated as follows. Inhibited by Hg(2+) and D-glucono-1,5-lactone. Beta-glucosidase highly specific for the cleavage of C-26-bound glucose moiety of furostanol glycosides torvosides A and H. Hydrolyzes only p-nitrophenyl-beta-glucoside, but not p-nitrophenyl-beta-D-fucoside, p-nitrophenyl-beta-L-fucoside, p-nitrophenyl-beta-D-xyloside, p-nitrophenyl-beta-D-galactoside, p-nitrophenyl-beta-D-NAc-glucosamine, p-nitrophenyl-beta-D-mannoside or any of the p-nitrophenyl-alpha-glycosides tested. This chain is Furostanol glycoside 26-O-beta-glucosidase, found in Solanum torvum (Turkey berry).